Consider the following 221-residue polypeptide: ATP phosphoribosyltransferase (221 aa).

Belongs to the ATP phosphoribosyltransferase family. Short subfamily. As to quaternary structure, heteromultimer composed of HisG and HisZ subunits.

It localises to the cytoplasm. It carries out the reaction 1-(5-phospho-beta-D-ribosyl)-ATP + diphosphate = 5-phospho-alpha-D-ribose 1-diphosphate + ATP. Its pathway is amino-acid biosynthesis; L-histidine biosynthesis; L-histidine from 5-phospho-alpha-D-ribose 1-diphosphate: step 1/9. Its function is as follows. Catalyzes the condensation of ATP and 5-phosphoribose 1-diphosphate to form N'-(5'-phosphoribosyl)-ATP (PR-ATP). Has a crucial role in the pathway because the rate of histidine biosynthesis seems to be controlled primarily by regulation of HisG enzymatic activity. This is ATP phosphoribosyltransferase from Anaeromyxobacter sp. (strain K).